A 1863-amino-acid chain; its full sequence is 5'-3' DNA helicase ZGRF1 (1863 aa).

Disordered stretches follow at residues 78 to 110 (SRAV…QPSG), 132 to 196 (ENSE…PLSL), and 300 to 349 (TQSI…PEAQ). The span at 81–90 (VEPDGSREAL) shows a compositional bias: basic and acidic residues. The segment covering 92-105 (SGSRTLVSSSRSLG) has biased composition (low complexity). Polar residues-rich tracts occupy residues 173–185 (PVST…ITFS) and 300–321 (TQSI…TTSR). 2 positions are modified to phosphoserine: serine 331 and serine 445. Disordered regions lie at residues 460-496 (PVSP…SKSN), 524-545 (TSDT…ERWE), and 610-664 (GDVK…GVSP). The span at 533 to 545 (EDSRLSQDSERWE) shows a compositional bias: basic and acidic residues. Zn(2+) contacts are provided by cysteine 1111, histidine 1113, cysteine 1136, and cysteine 1144. The GRF-type zinc finger occupies 1111 to 1153 (CHHNQPAKLVMVKKEGPNKGRLFYTCDKSKDNQCKFFKWLEEV).

In terms of assembly, interacts with DNA repair protein RAD51; the interaction promotes RAD51 strand exchange activity. Also interacts with DNA repair proteins EXO1 and BRCA1; the interactions are increased following DNA damage induction.

The protein localises to the nucleus. It catalyses the reaction ATP + H2O = ADP + phosphate + H(+). It carries out the reaction Couples ATP hydrolysis with the unwinding of duplex DNA at the replication fork by translocating in the 5'-3' direction. This creates two antiparallel DNA single strands (ssDNA). The leading ssDNA polymer is the template for DNA polymerase III holoenzyme which synthesizes a continuous strand.. 5'-3' DNA helicase which is recruited to sites of DNA damage and promotes repair of replication-blocking DNA lesions through stimulation of homologous recombination (HR). Promotes HR by directly stimulating RAD51-mediated strand exchange activity. Not required to load RAD51 at sites of DNA damage but promotes recombinational repair after RAD51 recruitment. Also promotes HR by positively regulating EXO1-mediated DNA end resection of DNA double-strand breaks. Required for recruitment of replication protein RPA2 to DNA damage sites. Promotes the initiation of the G2/M checkpoint but not its maintenance. Catalyzes Holliday junction branch migration and dissociation of D-loops and DNA flaps. The sequence is that of 5'-3' DNA helicase ZGRF1 (Zgrf1) from Mus musculus (Mouse).